We begin with the raw amino-acid sequence, 397 residues long: Putative serine/threonine-protein kinase R301 (397 aa).

The 373-residue stretch at 25-397 (QIKSTSVGSG…IIRHFNSPRL (373 aa)) folds into the Protein kinase domain. ATP is bound by residues 31–39 (VGSGGSDNI) and Lys-53. Asp-218 (proton acceptor) is an active-site residue.

It belongs to the protein kinase superfamily. Ser/Thr protein kinase family.

It localises to the virion. The enzyme catalyses L-seryl-[protein] + ATP = O-phospho-L-seryl-[protein] + ADP + H(+). It catalyses the reaction L-threonyl-[protein] + ATP = O-phospho-L-threonyl-[protein] + ADP + H(+). This is Putative serine/threonine-protein kinase R301 from Acanthamoeba polyphaga (Amoeba).